A 320-amino-acid chain; its full sequence is Malate dehydrogenase (320 aa).

NAD(+) contacts are provided by residues 10–15 (GSGMIG) and D34. The substrate site is built by R83 and R89. NAD(+) contacts are provided by residues N96 and 119–121 (ITN). Residues N121 and R152 each coordinate substrate. H176 (proton acceptor) is an active-site residue.

It belongs to the LDH/MDH superfamily. MDH type 3 family.

It carries out the reaction (S)-malate + NAD(+) = oxaloacetate + NADH + H(+). In terms of biological role, catalyzes the reversible oxidation of malate to oxaloacetate. The protein is Malate dehydrogenase of Rhizobium etli (strain CIAT 652).